The sequence spans 157 residues: MLKIYEDIINEVISRLEQVEDEVSIGKSAIHELRNEWRERLIEYTQSEWDGERMRRRDGEQGYHGYERLSEGPAHAFGGKPTTAKDPGMFEDYGSSDVSSGDSEIIGTKGSTGNCMVCLYVKVNMSKGKWKCTFKQGFISIGNIDFVFNSAQGELEW.

Belongs to the TFIIA subunit 1 family. In terms of assembly, TFIIA is a heterodimer of the large subunit and the small subunit gamma.

It is found in the nucleus. Its function is as follows. TFIIA is a component of the transcription machinery of RNA polymerase II and plays an important role in transcriptional activation. The polypeptide is Transcription initiation factor IIA large subunit (TOA1) (Encephalitozoon cuniculi (strain GB-M1) (Microsporidian parasite)).